An 89-amino-acid polypeptide reads, in one-letter code: Small ribosomal subunit protein uS15 (89 aa).

Residues 1–10 are compositionally biased toward basic and acidic residues; that stretch reads MSITAERKAE. A disordered region spans residues 1–24; sequence MSITAERKAEVIQGNANKAGDTGS.

The protein belongs to the universal ribosomal protein uS15 family. Part of the 30S ribosomal subunit. Forms a bridge to the 50S subunit in the 70S ribosome, contacting the 23S rRNA.

In terms of biological role, one of the primary rRNA binding proteins, it binds directly to 16S rRNA where it helps nucleate assembly of the platform of the 30S subunit by binding and bridging several RNA helices of the 16S rRNA. Forms an intersubunit bridge (bridge B4) with the 23S rRNA of the 50S subunit in the ribosome. This Rhodopseudomonas palustris (strain BisB5) protein is Small ribosomal subunit protein uS15.